A 192-amino-acid polypeptide reads, in one-letter code: MFDITDEAKVYVADLFAQQDEKDLGLKVDVEKAGTPAAVVTFNFCFPKELSKTYKKFEYEGFYAYIDELNFEYLKDSEVALKDAGTGKKLTITAPNTKGKEPKEDAPLEEKIKYVIAANINPGLASHGGFVELVEITKHMDVILNFGGGCQGCSSVKSTLEQGVEAQLKMSFPEIKSVRDVTDHSNTDNAYI.

[4Fe-4S] cluster is bound by residues C150 and C153.

Belongs to the NfuA family. In terms of assembly, homodimer. [4Fe-4S] cluster serves as cofactor.

Involved in iron-sulfur cluster biogenesis. Binds a 4Fe-4S cluster, can transfer this cluster to apoproteins, and thereby intervenes in the maturation of Fe/S proteins. Could also act as a scaffold/chaperone for damaged Fe/S proteins. The protein is Fe/S biogenesis protein NfuA of Ruthia magnifica subsp. Calyptogena magnifica.